The sequence spans 357 residues: Anthranilate phosphoribosyltransferase (357 aa).

5-phospho-alpha-D-ribose 1-diphosphate is bound by residues G91, 94-95, T99, 101-104, 119-127, and S131; these read GD, NIST, and KHGNRSVSS. G91 provides a ligand contact to anthranilate. S103 contacts Mg(2+). N122 contributes to the anthranilate binding site. R177 is a binding site for anthranilate. Residues D235 and E236 each contribute to the Mg(2+) site.

This sequence belongs to the anthranilate phosphoribosyltransferase family. Homodimer. It depends on Mg(2+) as a cofactor.

It carries out the reaction N-(5-phospho-beta-D-ribosyl)anthranilate + diphosphate = 5-phospho-alpha-D-ribose 1-diphosphate + anthranilate. It participates in amino-acid biosynthesis; L-tryptophan biosynthesis; L-tryptophan from chorismate: step 2/5. Functionally, catalyzes the transfer of the phosphoribosyl group of 5-phosphorylribose-1-pyrophosphate (PRPP) to anthranilate to yield N-(5'-phosphoribosyl)-anthranilate (PRA). This chain is Anthranilate phosphoribosyltransferase, found in Shewanella baltica (strain OS185).